We begin with the raw amino-acid sequence, 508 residues long: Hydroxymethylglutaryl-CoA synthase, mitochondrial (508 aa).

Residues 1–37 (MQRLLTPVRQVLQVKRVMQEASLLPARLLPAAHPSFS) constitute a mitochondrion transit peptide. Lys52 carries the N6-succinyllysine modification. The (3S)-3-hydroxy-3-methylglutaryl-CoA site is built by Glu80 and Ala81. Residue Glu132 is the Proton donor/acceptor of the active site. 3 residues coordinate (3S)-3-hydroxy-3-methylglutaryl-CoA: Cys166, Asn204, and Thr208. Cys166 acts as the Acyl-thioester intermediate in catalysis. Lys243 carries the N6-acetyllysine modification. The residue at position 256 (Lys256) is an N6-acetyllysine; alternate. Position 256 is an N6-succinyllysine; alternate (Lys256). Ser258 and His301 together coordinate (3S)-3-hydroxy-3-methylglutaryl-CoA. Catalysis depends on His301, which acts as the Proton donor/acceptor. Residue Lys306 is modified to N6-acetyllysine. Lys310 is a (3S)-3-hydroxy-3-methylglutaryl-CoA binding site. At Lys310 the chain carries N6-acetyllysine; alternate. The residue at position 310 (Lys310) is an N6-succinyllysine; alternate. Lys333 carries the N6-succinyllysine modification. Residues Lys342, Lys350, Lys354, and Lys358 each carry the N6-acetyllysine; alternate modification. N6-succinyllysine; alternate occurs at positions 342, 350, 354, and 358. 2 residues coordinate (3S)-3-hydroxy-3-methylglutaryl-CoA: Asn380 and Ser414. Ser433 carries the phosphoserine modification. Lys437 is subject to N6-acetyllysine. Position 440 is a phosphoserine (Ser440). At Lys447 the chain carries N6-acetyllysine; alternate. The residue at position 447 (Lys447) is an N6-succinyllysine; alternate. Ser456 carries the phosphoserine modification. Lys473 carries the N6-acetyllysine; alternate modification. N6-succinyllysine; alternate is present on Lys473. Ser477 carries the post-translational modification Phosphoserine.

This sequence belongs to the thiolase-like superfamily. HMG-CoA synthase family. As to quaternary structure, homodimer. In terms of processing, succinylated. Desuccinylated by SIRT5. Succinylation, at least at Lys-310, inhibits the enzymatic activity.

It localises to the mitochondrion. It carries out the reaction acetoacetyl-CoA + acetyl-CoA + H2O = (3S)-3-hydroxy-3-methylglutaryl-CoA + CoA + H(+). It participates in metabolic intermediate biosynthesis; (R)-mevalonate biosynthesis; (R)-mevalonate from acetyl-CoA: step 2/3. Functionally, catalyzes the first irreversible step in ketogenesis, condensing acetyl-CoA to acetoacetyl-CoA to form HMG-CoA, which is converted by HMG-CoA reductase (HMGCR) into mevalonate. The protein is Hydroxymethylglutaryl-CoA synthase, mitochondrial (HMGCS2) of Bos taurus (Bovine).